Reading from the N-terminus, the 176-residue chain is I-Kappa-B like protein G1 (176 aa).

3 ANK repeats span residues 56 to 88 (EGRQ…DINS), 93 to 123 (FGNT…ELGA), and 127 to 156 (LYKT…VCDD).

The protein belongs to the polydnaviridae I-Kappa-B-like protein family.

Suppresses the host immune response through NF-kappa-B inactivation. Possesses ankyrin repeat domains required for NF-kappa-B binding but lacks the regulatory regions required for dissociation from NF-kappa-B and degradation. Therefore, prevents host NF-kappa-B release and subsequent activation. The polypeptide is I-Kappa-B like protein G1 (G3) (Microplitis demolitor (Parasitoid wasp)).